The primary structure comprises 20 residues: Luminal-binding protein (20 aa).

Belongs to the heat shock protein 70 family.

It localises to the endoplasmic reticulum lumen. In terms of biological role, probably plays a role in facilitating the assembly of multimeric protein complexes inside the ER. The protein is Luminal-binding protein of Phaseolus vulgaris (Kidney bean).